The chain runs to 260 residues: UPF0246 protein BamMC406_2140 (260 aa).

It belongs to the UPF0246 family.

The chain is UPF0246 protein BamMC406_2140 from Burkholderia ambifaria (strain MC40-6).